A 478-amino-acid chain; its full sequence is 3-ketoacyl-CoA synthase 3 (478 aa).

A signal peptide spans 1–25 (MDLLVMLLSLLVSYLIFKIWKRIDS). The FAE domain occupies 26-313 (KRDQNCYILD…FMLCLLLKKL (288 aa)). Residues cysteine 168, histidine 247, histidine 345, histidine 349, histidine 378, and asparagine 382 contribute to the active site.

Belongs to the thiolase-like superfamily. Chalcone/stilbene synthases family. In terms of tissue distribution, expressed in siliques, leaves, stems and seedlings.

It is found in the endoplasmic reticulum. It catalyses the reaction a very-long-chain acyl-CoA + malonyl-CoA + H(+) = a very-long-chain 3-oxoacyl-CoA + CO2 + CoA. It participates in lipid metabolism; fatty acid biosynthesis. In Arabidopsis thaliana (Mouse-ear cress), this protein is 3-ketoacyl-CoA synthase 3.